The primary structure comprises 123 residues: Cyclic ether formation enzyme xenC (123 aa).

The signal sequence occupies residues 1-24; that stretch reads MSSLLLSDVLSYGIFGFSALCVQA. 2 consecutive transmembrane segments (helical) span residues 58-78 and 102-122; these read SALR…LWSP and LGES…AILV.

The protein belongs to the cyclic ether formation enzyme xenC family.

Its subcellular location is the membrane. Its pathway is mycotoxin biosynthesis. In terms of biological role, cyclic ether formation enzyme; part of the gene cluster that mediates the biosynthesis of xenoacremones such as xenoacremone A, a compound that shows inhibitory activity toward the PI3K/AKT signaling pathway and which has the ability to induce apoptosis of A549 lung cancer cells. Within the pathway, cooperation of the hybrid PKS-NRPS xenE and the trans-acting enoyl reductase xenG is responsible for the formation of the reduced tyrosine-nonaketide derivative. The alpha/beta hydrolase xenA then accelerates intramolecular nucleophilic attack to give a pyrrolidone derivative. Subsequently, three enzymes, xenF, xenD, and xenC, coordinately participate in the conversion to xenoacremone B. XenF catalyzes sigmatropic rearrangement to form an A-ring, which leads to an unusual intermediate with a hexane ring, which is required for the formation of the tricarbocyclic product. Epoxidation catalyzed by xenD and the formation of the paracyclophane ether catalyzed by xenC initiate a spontaneous intramolecular Diels-Alder (IMDA) reaction to yield xenoacremone B. Spontaneous hydration of xenoacremone B leads to the formation of xenoacremone A, which undergoes subsequent methylation to afford xenoacremone C. The chain is Cyclic ether formation enzyme xenC from Xenoacremonium sinensis (Endophyte fungus).